The chain runs to 364 residues: Aminomethyltransferase (364 aa).

The protein belongs to the GcvT family. In terms of assembly, the glycine cleavage system is composed of four proteins: P, T, L and H.

It catalyses the reaction N(6)-[(R)-S(8)-aminomethyldihydrolipoyl]-L-lysyl-[protein] + (6S)-5,6,7,8-tetrahydrofolate = N(6)-[(R)-dihydrolipoyl]-L-lysyl-[protein] + (6R)-5,10-methylene-5,6,7,8-tetrahydrofolate + NH4(+). Functionally, the glycine cleavage system catalyzes the degradation of glycine. This is Aminomethyltransferase from Citrobacter koseri (strain ATCC BAA-895 / CDC 4225-83 / SGSC4696).